The primary structure comprises 572 residues: MSVKISGKDYAGMYGPTKGDRVRLADTDLIIEIEEDYTVYGDECKFGGGKSIRDGMGQSPSAARDDKVLDLVITNAIIFDTWGIVKGDIGIKDGKIAGIGKAGNPKVMSGVSEDLIIGASTEVITGEGLIVTPGGIDTHIHFICPQQIETALFSGITTMIGGGTGPADGTNATTCTPGAFNIRKMLEAAEDFPVNLGFLGKGNASFETPLIEQIEAGAIGLKLHEDWGTTPKAIDTCLKVADLFDVQVAIHTDTLNEAGFVENTIAAIAGRTIHTYHTEGAGGGHAPDIIKIASRMNVLPSSTNPTMPFTVNTLDEHLDMLMVCHHLDSKVKEDVAFADSRIRPETIAAEDILHDMGVFSMMSSDSQAMGRVGEVIIRTWQTAHKMKLQRGALPGEKSGCDNIRAKRYLAKYTINPAITHGISQYVGSLEKGKIADLVLWKPAMFGVKPEMIIKGGFIIAGRMGDANASIPTPQPVIYKNMFGAFGKAKYGTCVTFVSKASLENGVVEKMGLQRKVLPVQGCRNISKKYMVHNNATPEIEVDPETYEVKVDGEIITCEPLKVLPMAQRYFLF.

Ni(2+) is bound by residues H139, H141, and K222. K222 carries the N6-carboxylysine modification. Substrate is bound at residue H224. Ni(2+) contacts are provided by H251 and H277. The active-site Proton donor is H325. Position 365 (D365) interacts with Ni(2+).

It belongs to the metallo-dependent hydrolases superfamily. Urease alpha subunit family. In terms of assembly, heterotrimer of UreA (gamma), UreB (beta) and UreC (alpha) subunits. Three heterotrimers associate to form the active enzyme. Ni cation serves as cofactor. Carboxylation allows a single lysine to coordinate two nickel ions.

The protein resides in the cytoplasm. The enzyme catalyses urea + 2 H2O + H(+) = hydrogencarbonate + 2 NH4(+). It participates in nitrogen metabolism; urea degradation; CO(2) and NH(3) from urea (urease route): step 1/1. The chain is Urease subunit alpha from Acetivibrio thermocellus (strain ATCC 27405 / DSM 1237 / JCM 9322 / NBRC 103400 / NCIMB 10682 / NRRL B-4536 / VPI 7372) (Clostridium thermocellum).